Consider the following 186-residue polypeptide: MTNTFFLAAETLPLEEPINPLIPPLYDIVWSIIPFAVILFVFAKVVLPKFQEVLTQREDKIEGGIQRAEAAKAEAQEALEKYNKQLAEARTEAAQIRDDARSQGQKIIADMKTQATEESNRIVEAGNKQLEANRASVVADLRKEMGENSINLAERLLGEQLNDDVKRSGTIDNFLAGLDNVGTAGK.

Residues 28–48 traverse the membrane as a helical segment; the sequence is IVWSIIPFAVILFVFAKVVLP.

It belongs to the ATPase B chain family. In terms of assembly, F-type ATPases have 2 components, F(1) - the catalytic core - and F(0) - the membrane proton channel. F(1) has five subunits: alpha(3), beta(3), gamma(1), delta(1), epsilon(1). F(0) has three main subunits: a(1), b(2) and c(10-14). The alpha and beta chains form an alternating ring which encloses part of the gamma chain. F(1) is attached to F(0) by a central stalk formed by the gamma and epsilon chains, while a peripheral stalk is formed by the delta and b chains.

It localises to the cell membrane. F(1)F(0) ATP synthase produces ATP from ADP in the presence of a proton or sodium gradient. F-type ATPases consist of two structural domains, F(1) containing the extramembraneous catalytic core and F(0) containing the membrane proton channel, linked together by a central stalk and a peripheral stalk. During catalysis, ATP synthesis in the catalytic domain of F(1) is coupled via a rotary mechanism of the central stalk subunits to proton translocation. In terms of biological role, component of the F(0) channel, it forms part of the peripheral stalk, linking F(1) to F(0). The protein is ATP synthase subunit b of Corynebacterium urealyticum (strain ATCC 43042 / DSM 7109).